The following is a 355-amino-acid chain: UPF0421 protein BALH_2468 (355 aa).

4 consecutive transmembrane segments (helical) span residues 19 to 39 (IAVF…IFAV), 74 to 94 (FTFF…FTIV), 109 to 129 (TLTA…AFLI), and 131 to 151 (LATT…ILPP).

This sequence belongs to the UPF0421 family.

It is found in the cell membrane. The polypeptide is UPF0421 protein BALH_2468 (Bacillus thuringiensis (strain Al Hakam)).